The sequence spans 124 residues: Protein MGF 110-4L (124 aa).

The signal sequence occupies residues 1 to 28 (MLVIFLGILGLLANQVLGLPTQAGGHLR). N-linked (GlcNAc...) asparagine; by host glycosylation occurs at N64. Positions 121-124 (KEDL) match the Prevents secretion from ER motif.

This sequence belongs to the asfivirus MGF 110 family.

The protein localises to the virion. Its subcellular location is the host endoplasmic reticulum-Golgi intermediate compartment. Its function is as follows. Causes the redistribution of lumenal ER protein to an enlarged ERGIC compartment. This chain is Protein MGF 110-4L, found in African swine fever virus (strain Badajoz 1971 Vero-adapted) (Ba71V).